Consider the following 492-residue polypeptide: Catalase (492 aa).

Active-site residues include histidine 65 and asparagine 138. Tyrosine 348 serves as a coordination point for heme.

This sequence belongs to the catalase family. Homotetramer. It depends on heme as a cofactor.

It is found in the cytoplasm. Its subcellular location is the cytosol. The protein localises to the peroxisome matrix. The catalysed reaction is 2 H2O2 = O2 + 2 H2O. Catalyzes the degradation of hydrogen peroxide (H(2)O(2)) generated by peroxisomal oxidases to water and oxygen, thereby protecting cells from the toxic effects of hydrogen peroxide. The chain is Catalase from Vigna radiata var. radiata (Mung bean).